The following is a 494-amino-acid chain: Anaerobic nitric oxide reductase flavorubredoxin (494 aa).

The interval 30 to 210 (TKGTSYNSYL…PFSALVTAKI (181 aa)) is zinc metallo-hydrolase. Residues H79, E81, D83, H147, D166, and H227 each coordinate Fe cation. Positions 254–393 (ITIFYDSMSN…ECREHGQQIA (140 aa)) constitute a Flavodoxin-like domain. FMN contacts are provided by residues 260–264 (SMSNN) and 342–369 (AFGSYGWNGGAVDRIHARLTDAGFETAI). One can recognise a Rubredoxin-like domain in the interval 441–492 (CQCMVCTVCNWVYDPAKGEPNQGIEVGTTWADVPDYFLCPECHLGKDVFVEY). Positions 446, 449, 479, and 482 each coordinate Fe cation.

It in the N-terminal section; belongs to the zinc metallo-hydrolase group 3 family. In terms of assembly, homotetramer. Requires Fe cation as cofactor. The cofactor is FMN.

Its subcellular location is the cytoplasm. It participates in nitrogen metabolism; nitric oxide reduction. Anaerobic nitric oxide reductase; uses NADH to detoxify nitric oxide (NO), protecting several 4Fe-4S NO-sensitive enzymes. Has at least 2 reductase partners, only one of which (NorW, flavorubredoxin reductase) has been identified. NO probably binds to the di-iron center; electrons enter from the NorW at rubredoxin and are transferred sequentially to the FMN center and the di-iron center. Also able to function as an aerobic oxygen reductase. The sequence is that of Anaerobic nitric oxide reductase flavorubredoxin from Vibrio vulnificus (strain YJ016).